The primary structure comprises 192 residues: Peroxiredoxin tpx1 (192 aa).

In terms of domain architecture, Thioredoxin spans 3–161 (LQIGKPAPDF…ALRLLDAFQF (159 aa)). C48 acts as the Cysteine sulfenic acid (-SOH) intermediate in catalysis. 2 positions are modified to phosphoserine: S105 and S148.

Belongs to the peroxiredoxin family. AhpC/Prx1 subfamily. In terms of assembly, homodimer; disulfide-linked, upon oxidation. Interacts with srx1 in response to oxidative stress. Interacts with pap1 via transient disulfide linkages. In terms of processing, the enzyme can be inactivated by further oxidation of the cysteine sulfenic acid (C(P)-SOH) to sulphinic acid (C(P)-SO2H) instead of its condensation to a disulfide bond. It can be reactivated by forming a transient disulfide bond with sulfiredoxin srx1, which reduces the cysteine sulfinic acid in an ATP- and Mg-dependent manner.

The protein localises to the cytoplasm. The protein resides in the nucleus. The catalysed reaction is a hydroperoxide + [thioredoxin]-dithiol = an alcohol + [thioredoxin]-disulfide + H2O. Its function is as follows. Thiol-specific peroxidase that catalyzes the reduction of hydrogen peroxide and organic hydroperoxides to water and alcohols, respectively. Plays a role in cell protection against oxidative stress by detoxifying peroxides and as sensor of hydrogen peroxide-mediated signaling events. Relays hydrogen peroxide as a signal to the transcription factor pap1 by inducing the formation of intramolecular disulfide bonds in pap1, which causes its nuclear accumulation and activation. Reduced by srx1 and this regulation acts as a molecular switch controlling the transcriptional response to hydrogen peroxide. This Schizosaccharomyces pombe (strain 972 / ATCC 24843) (Fission yeast) protein is Peroxiredoxin tpx1 (tpx1).